The sequence spans 1150 residues: ATP-dependent helicase/deoxyribonuclease subunit B (1150 aa).

ATP is bound at residue 8 to 15 (GRAGSGKS). [4Fe-4S] cluster-binding residues include Cys789, Cys1109, Cys1112, and Cys1118.

The protein belongs to the helicase family. AddB/RexB type 1 subfamily. Heterodimer of AddA and AddB. Requires Mg(2+) as cofactor. [4Fe-4S] cluster is required as a cofactor.

Its function is as follows. The heterodimer acts as both an ATP-dependent DNA helicase and an ATP-dependent, dual-direction single-stranded exonuclease. Recognizes the chi site generating a DNA molecule suitable for the initiation of homologous recombination. The AddB subunit has 5' -&gt; 3' nuclease activity but not helicase activity. The sequence is that of ATP-dependent helicase/deoxyribonuclease subunit B from Clostridium kluyveri (strain NBRC 12016).